We begin with the raw amino-acid sequence, 137 residues long: 2-iminobutanoate/2-iminopropanoate deaminase (137 aa).

Serine 2 is modified (N-acetylserine). An N6-succinyllysine mark is found at lysine 13 and lysine 67. At threonine 74 the chain carries Phosphothreonine. Residue serine 136 is modified to Phosphoserine.

This sequence belongs to the RutC family. Homotrimer. Interacts with YTHDF2.

It is found in the cytoplasm. It localises to the nucleus. The protein resides in the peroxisome. The protein localises to the mitochondrion. It carries out the reaction 2-iminobutanoate + H2O = 2-oxobutanoate + NH4(+). It catalyses the reaction 2-iminopropanoate + H2O = pyruvate + NH4(+). Its function is as follows. Catalyzes the hydrolytic deamination of enamine/imine intermediates that form during the course of normal metabolism. May facilitate the release of ammonia from these potentially toxic reactive metabolites, reducing their impact on cellular components. It may act on enamine/imine intermediates formed by several types of pyridoxal-5'-phosphate-dependent dehydratases including L-threonine dehydratase. Functionally, also promotes endoribonucleolytic cleavage of some transcripts by promoting recruitment of the ribonuclease P/MRP complex. Acts by bridging YTHDF2 and the ribonuclease P/MRP complex. RIDA/HRSP12 binds to N6-methyladenosine (m6A)-containing mRNAs containing a 5'-GGUUC-3' motif: cooperative binding of RIDA/HRSP12 and YTHDF2 to such transcripts lead to recruitment of the ribonuclease P/MRP complex and subsequent endoribonucleolytic cleavage. The chain is 2-iminobutanoate/2-iminopropanoate deaminase from Bos taurus (Bovine).